The following is a 23-amino-acid chain: Toxin Acra2 (23 aa).

The LCN-type CS-alpha/beta domain occupies 2-23; sequence KDGYIVDSNGCAPECFPTNXGC.

Contains 4 disulfide bonds. In terms of tissue distribution, expressed by the venom gland.

The protein localises to the secreted. Functionally, excitatory insect toxins induce a spastic paralysis. They bind voltage-independently at site-4 of sodium channels (Nav) and shift the voltage of activation toward more negative potentials thereby affecting sodium channel activation and promoting spontaneous and repetitive firing. Is lethal to mice. Is about 1% of the total protein in the venom. The sequence is that of Toxin Acra2 from Androctonus crassicauda (Arabian fat-tailed scorpion).